Reading from the N-terminus, the 130-residue chain is UPF0713 protein YngL (130 aa).

A run of 3 helical transmembrane segments spans residues 4–25, 62–84, and 89–111; these read LSFL…LIVF, MLNC…YLFL, and IPLI…VGVG.

It belongs to the UPF0713 family.

Its subcellular location is the cell membrane. This Bacillus subtilis (strain 168) protein is UPF0713 protein YngL (yngL).